We begin with the raw amino-acid sequence, 130 residues long: Glycine cleavage system H protein (130 aa).

The Lipoyl-binding domain occupies 24-106; sequence EYTVGITEHA…YHEGWLFRIK (83 aa). Lys-65 bears the N6-lipoyllysine mark.

The protein belongs to the GcvH family. In terms of assembly, the glycine cleavage system is composed of four proteins: P, T, L and H. (R)-lipoate is required as a cofactor.

Functionally, the glycine cleavage system catalyzes the degradation of glycine. The H protein shuttles the methylamine group of glycine from the P protein to the T protein. The sequence is that of Glycine cleavage system H protein from Photorhabdus laumondii subsp. laumondii (strain DSM 15139 / CIP 105565 / TT01) (Photorhabdus luminescens subsp. laumondii).